The sequence spans 182 residues: CASP-like protein 5B1 (182 aa).

The disordered stretch occupies residues 1–20 (GDASHAVDHPIGGHPEHEHD). Residues 1-41 (GDASHAVDHPIGGHPEHEHDLREEEGPLIFPMKDLPGTPGT) are Cytoplasmic-facing. A helical transmembrane segment spans residues 42–62 (VGGLALRMGQFIFAAASVVIM). Residues 63–73 (VTSDEFINFTA) are Extracellular-facing. Residue N70 is glycosylated (N-linked (GlcNAc...) asparagine). The helical transmembrane segment at 74–94 (FCYLAAAMALQFLWSFVLATI) threads the bilayer. Residues 95-108 (DVYALLIKRGLPNS) are Cytoplasmic-facing. Residues 109 to 129 (ILLSLFVVGDWVTATLSLAAA) traverse the membrane as a helical segment. Topologically, residues 130–159 (CSTAGITVLFDKDLNYCDQMHCRRYQLSAT) are extracellular. The chain crosses the membrane as a helical span at residues 160–180 (MAFFSWVLIAISSLITLLLLV). Topologically, residues 181–182 (SE) are cytoplasmic.

This sequence belongs to the Casparian strip membrane proteins (CASP) family. As to quaternary structure, homodimer and heterodimers.

It is found in the cell membrane. The polypeptide is CASP-like protein 5B1 (Picea sitchensis (Sitka spruce)).